Reading from the N-terminus, the 173-residue chain is Ribosome maturation factor RimP (173 aa).

This sequence belongs to the RimP family.

The protein localises to the cytoplasm. Required for maturation of 30S ribosomal subunits. The chain is Ribosome maturation factor RimP from Chlorobaculum tepidum (strain ATCC 49652 / DSM 12025 / NBRC 103806 / TLS) (Chlorobium tepidum).